The primary structure comprises 140 residues: Large ribosomal subunit protein uL14 (140 aa).

It belongs to the universal ribosomal protein uL14 family. In terms of assembly, part of the 50S ribosomal subunit. Forms a cluster with proteins L3 and L24e, part of which may contact the 16S rRNA in 2 intersubunit bridges.

Functionally, binds to 23S rRNA. Forms part of two intersubunit bridges in the 70S ribosome. This is Large ribosomal subunit protein uL14 from Nitrosopumilus maritimus (strain SCM1).